Consider the following 557-residue polypeptide: Urocanate hydratase (557 aa).

NAD(+) is bound by residues Gly-53–Gly-54, Gln-131, Gly-177–Gly-179, Glu-197, Arg-202, Asn-243–Ala-244, Gln-264–His-268, Tyr-274–Leu-275, and Tyr-323. The active site involves Cys-411. Gly-493 is an NAD(+) binding site.

This sequence belongs to the urocanase family. The cofactor is NAD(+).

The protein resides in the cytoplasm. The enzyme catalyses 4-imidazolone-5-propanoate = trans-urocanate + H2O. Its pathway is amino-acid degradation; L-histidine degradation into L-glutamate; N-formimidoyl-L-glutamate from L-histidine: step 2/3. Functionally, catalyzes the conversion of urocanate to 4-imidazolone-5-propionate. This chain is Urocanate hydratase, found in Pseudomonas putida (strain ATCC 700007 / DSM 6899 / JCM 31910 / BCRC 17059 / LMG 24140 / F1).